Here is a 460-residue protein sequence, read N- to C-terminus: Probable serine/threonine-protein kinase kinase DDB_G0280557 (460 aa).

The region spanning Ile102–Phe416 is the Protein kinase domain. ATP contacts are provided by residues Lys131 and Gln154 to Leu162. Asp250 serves as the catalytic Proton acceptor.

This sequence belongs to the protein kinase superfamily. CMGC Ser/Thr protein kinase family. MAP kinase subfamily.

The enzyme catalyses L-seryl-[protein] + ATP = O-phospho-L-seryl-[protein] + ADP + H(+). It catalyses the reaction L-threonyl-[protein] + ATP = O-phospho-L-threonyl-[protein] + ADP + H(+). The chain is Probable serine/threonine-protein kinase kinase DDB_G0280557 from Dictyostelium discoideum (Social amoeba).